The chain runs to 137 residues: Golgin subfamily A member 7 (137 aa).

Residues C69 and C72 are each lipidated (S-palmitoyl cysteine).

Belongs to the ERF4 family. In terms of assembly, interacts with ZDHHC9.

Its subcellular location is the golgi apparatus membrane. Its function is as follows. May be involved in protein transport from Golgi to cell surface. The ZDHHC9-GOLGA7 complex is a palmitoyltransferase specific for HRAS and NRAS. The chain is Golgin subfamily A member 7 (GOLGA7) from Gallus gallus (Chicken).